The following is a 261-amino-acid chain: Hydroxyethylthiazole kinase (261 aa).

Methionine 40 is a binding site for substrate. The ATP site is built by lysine 116 and threonine 162. Glycine 189 lines the substrate pocket.

It belongs to the Thz kinase family. The cofactor is Mg(2+).

It catalyses the reaction 5-(2-hydroxyethyl)-4-methylthiazole + ATP = 4-methyl-5-(2-phosphooxyethyl)-thiazole + ADP + H(+). It functions in the pathway cofactor biosynthesis; thiamine diphosphate biosynthesis; 4-methyl-5-(2-phosphoethyl)-thiazole from 5-(2-hydroxyethyl)-4-methylthiazole: step 1/1. Functionally, catalyzes the phosphorylation of the hydroxyl group of 4-methyl-5-beta-hydroxyethylthiazole (THZ). The polypeptide is Hydroxyethylthiazole kinase (Methanosarcina acetivorans (strain ATCC 35395 / DSM 2834 / JCM 12185 / C2A)).